The primary structure comprises 360 residues: DNA replication and repair protein RecF (360 aa).

30–37 (GHNGSGKT) contacts ATP.

The protein belongs to the RecF family.

It localises to the cytoplasm. The RecF protein is involved in DNA metabolism; it is required for DNA replication and normal SOS inducibility. RecF binds preferentially to single-stranded, linear DNA. It also seems to bind ATP. The sequence is that of DNA replication and repair protein RecF from Shewanella denitrificans (strain OS217 / ATCC BAA-1090 / DSM 15013).